We begin with the raw amino-acid sequence, 141 residues long: Sec-independent protein translocase protein TatB (141 aa).

The chain crosses the membrane as a helical span at residues 2–22; it reads FANVGWGEMLVLVIAGLVILG. Residues 92–141 are disordered; that stretch reads IFTGRFDSTSSDQPGSGKPPKPQSGPGPAAASGPAATTTPASTPFDPDAT. Positions 117 to 141 are enriched in low complexity; that stretch reads PGPAAASGPAATTTPASTPFDPDAT.

It belongs to the TatB family. The Tat system comprises two distinct complexes: a TatABC complex, containing multiple copies of TatA, TatB and TatC subunits, and a separate TatA complex, containing only TatA subunits. Substrates initially bind to the TatABC complex, which probably triggers association of the separate TatA complex to form the active translocon.

The protein localises to the cell membrane. Its function is as follows. Part of the twin-arginine translocation (Tat) system that transports large folded proteins containing a characteristic twin-arginine motif in their signal peptide across membranes. Together with TatC, TatB is part of a receptor directly interacting with Tat signal peptides. TatB may form an oligomeric binding site that transiently accommodates folded Tat precursor proteins before their translocation. This Mycolicibacterium gilvum (strain PYR-GCK) (Mycobacterium gilvum (strain PYR-GCK)) protein is Sec-independent protein translocase protein TatB.